The sequence spans 356 residues: HORMA domain-containing protein 1 (356 aa).

An HORMA domain is found at Gln24–Val225. Disordered stretches follow at residues Glu282 to Asp305 and Gln333 to Lys356. Residues Glu288 to Phe298 show a composition bias toward basic and acidic residues. A compositionally biased stretch (basic residues) spans Pro347–Lys356.

It localises to the nucleus. It is found in the chromosome. Functionally, plays a key role in meiotic progression by ensuring that sufficient numbers of processed DNA double-strand breaks (DSBs) are available for successful homology search, promoting synaptonemal-complex formation independently and playing key role in the male mid-pachytene checkpoint and the female meiotic prophase checkpoint. The sequence is that of HORMA domain-containing protein 1 (hormad1) from Danio rerio (Zebrafish).